The sequence spans 172 residues: MAGVNNRVKVTNDIELKDRLVAINRVTKVTKGGRTFSFSAIVVVGNEEGIIGWGLGKAGEVTAAIAKGVESAKKNLVKVPVLKGTVPHEQSAKFGGAEVFIKPASHGTGVVAGGAMRAVLESVGITDVLAKSKGSSNPHNLVKATIEALSEMRDARMIAQNRGISVEKVFRG.

The region spanning leucine 16–valine 79 is the S5 DRBM domain.

This sequence belongs to the universal ribosomal protein uS5 family. As to quaternary structure, part of the 30S ribosomal subunit. Contacts proteins S4 and S8.

Functionally, with S4 and S12 plays an important role in translational accuracy. Located at the back of the 30S subunit body where it stabilizes the conformation of the head with respect to the body. In Bacteroides thetaiotaomicron (strain ATCC 29148 / DSM 2079 / JCM 5827 / CCUG 10774 / NCTC 10582 / VPI-5482 / E50), this protein is Small ribosomal subunit protein uS5.